The following is a 277-amino-acid chain: Diaminopimelate epimerase (277 aa).

3 residues coordinate substrate: asparagine 13, glutamine 46, and asparagine 66. The active-site Proton donor is the cysteine 75. Substrate is bound by residues 76–77 (GN), asparagine 160, asparagine 193, and 211–212 (ER). The Proton acceptor role is filled by cysteine 220. Substrate is bound at residue 221–222 (GS).

Belongs to the diaminopimelate epimerase family. In terms of assembly, homodimer.

Its subcellular location is the cytoplasm. It catalyses the reaction (2S,6S)-2,6-diaminopimelate = meso-2,6-diaminopimelate. It functions in the pathway amino-acid biosynthesis; L-lysine biosynthesis via DAP pathway; DL-2,6-diaminopimelate from LL-2,6-diaminopimelate: step 1/1. Catalyzes the stereoinversion of LL-2,6-diaminopimelate (L,L-DAP) to meso-diaminopimelate (meso-DAP), a precursor of L-lysine and an essential component of the bacterial peptidoglycan. This chain is Diaminopimelate epimerase, found in Legionella pneumophila (strain Lens).